The primary structure comprises 90 residues: Small ribosomal subunit protein bS16 (90 aa).

This sequence belongs to the bacterial ribosomal protein bS16 family.

The protein is Small ribosomal subunit protein bS16 of Bacillus anthracis (strain A0248).